The chain runs to 206 residues: Thymidylate kinase (206 aa).

10 to 17 (GIDGAGKS) contributes to the ATP binding site.

It belongs to the thymidylate kinase family.

The catalysed reaction is dTMP + ATP = dTDP + ADP. In terms of biological role, phosphorylation of dTMP to form dTDP in both de novo and salvage pathways of dTTP synthesis. The chain is Thymidylate kinase (tmk) from Neisseria meningitidis serogroup B (strain ATCC BAA-335 / MC58).